A 357-amino-acid polypeptide reads, in one-letter code: Phosphate acyltransferase (357 aa).

It belongs to the PlsX family. In terms of assembly, homodimer. Probably interacts with PlsY.

The protein resides in the cytoplasm. It catalyses the reaction a fatty acyl-[ACP] + phosphate = an acyl phosphate + holo-[ACP]. The protein operates within lipid metabolism; phospholipid metabolism. Functionally, catalyzes the reversible formation of acyl-phosphate (acyl-PO(4)) from acyl-[acyl-carrier-protein] (acyl-ACP). This enzyme utilizes acyl-ACP as fatty acyl donor, but not acyl-CoA. The polypeptide is Phosphate acyltransferase (Roseobacter denitrificans (strain ATCC 33942 / OCh 114) (Erythrobacter sp. (strain OCh 114))).